We begin with the raw amino-acid sequence, 468 residues long: MDMMKFAPEPFKIKMVEPMGNLNKEERKDAIRTAGYNTFLLKSEECFIDLLTDSGTNAMSDRQWAGLMLGDEAYGGSRNFYHLEETVRELFGFKYVVPTHQGRGAENILSSLTIKPGDYVPGNMYFTTTRFHQEHNGATFRDVVIDEAHDPNAILDFKGNIDLNKFQALIDEVGAERIPYICLAVTVNLAGGQPVSMANVKAVSELAHKHGIKVMFDATRCVENAYFIKTREKGYEDKSIKEIVHELFSYGDGCTMSGKKDCLTNIGGFLCMNDKDLYIRATGMVVQYEGMPTYGGMAGRDMEAMAIGLRESMEYNYISHRVNQIRYLGEKLDAAGVPMVKPSGGHAIFVDARAFLDHLDQKTDFPAQALAAAVYEFSGVRTMERGIISAGRDIKTGEDHVPKLETIRLTIPRRVYTYAHLDYVADAIIQLYQMRRDISGLKWVYEPAVLRFFTGRFEPKNGELIKGF.

An N6-(pyridoxal phosphate)lysine modification is found at Lys-260.

Belongs to the beta-eliminating lyase family. Homotetramer. The cofactor is pyridoxal 5'-phosphate.

It catalyses the reaction L-tyrosine + H2O = phenol + pyruvate + NH4(+). This Lacrimispora saccharolytica (strain ATCC 35040 / DSM 2544 / NRCC 2533 / WM1) (Clostridium saccharolyticum) protein is Tyrosine phenol-lyase.